Reading from the N-terminus, the 423-residue chain is Histidine--tRNA ligase 2 (423 aa).

This sequence belongs to the class-II aminoacyl-tRNA synthetase family. As to quaternary structure, homodimer.

Its subcellular location is the cytoplasm. The catalysed reaction is tRNA(His) + L-histidine + ATP = L-histidyl-tRNA(His) + AMP + diphosphate + H(+). This chain is Histidine--tRNA ligase 2, found in Bacillus cereus (strain ATCC 10987 / NRS 248).